The primary structure comprises 231 residues: Small ribosomal subunit protein bS18c (231 aa).

Disordered regions lie at residues 1–31 (MEKS…PIES) and 95–231 (QKEE…TRKK). A compositionally biased stretch (basic residues) spans 9–26 (IKKKRPFRKKKRSFRKRR). Basic and acidic residues-rich tracts occupy residues 95–151 (QKEE…EFQR), 159–169 (TNEKQTNEKQT), and 212–231 (TNEK…TRKK).

It belongs to the bacterial ribosomal protein bS18 family. Part of the 30S ribosomal subunit.

Its subcellular location is the plastid. The protein localises to the chloroplast. In Jasminum nudiflorum (Winter jasmine), this protein is Small ribosomal subunit protein bS18c.